Consider the following 411-residue polypeptide: Carbohydrate sulfotransferase 1 (411 aa).

The Cytoplasmic segment spans residues 1–2; sequence MQ. Residues 3 to 23 form a helical; Signal-anchor for type II membrane protein membrane-spanning segment; it reads CSWKAVLLLALASIAIQYTAI. Residues 24 to 411 lie on the Lumenal side of the membrane; it reads RTFTAKSFHT…VEERDFRPFL (388 aa). N-linked (GlcNAc...) asparagine glycosylation is present at asparagine 56. 3'-phosphoadenylyl sulfate is bound at residue 69–75; that stretch reads TRSGSSF. Residues asparagine 145 and asparagine 189 are each glycosylated (N-linked (GlcNAc...) asparagine). 234 to 242 lines the 3'-phosphoadenylyl sulfate pocket; it reads RDPRGILAS. Residue asparagine 334 is glycosylated (N-linked (GlcNAc...) asparagine). The Cell attachment site motif lies at 337-339; it reads RGD.

Belongs to the sulfotransferase 1 family. Gal/GlcNAc/GalNAc subfamily. In terms of tissue distribution, broadly expressed with highest levels in central nervous system. Expressed in cortex (at protein level). Expressed in high endothelial venules in peripheral lymph nodes, mesenteric lymph nodes and Peyer's patches.

Its subcellular location is the golgi apparatus membrane. It carries out the reaction 3'-phosphoadenylyl sulfate + keratan = adenosine 3',5'-bisphosphate + keratan 6'-sulfate.. It functions in the pathway glycan metabolism. In terms of biological role, sulfotransferase that utilizes 3'-phospho-5'-adenylyl sulfate (PAPS) as sulfonate donor to catalyze the transfer of sulfate to position 6 of internal galactose (Gal) residues of keratan. Cooperates with B4GALT4 and B3GNT7 glycosyltransferases and CHST6 sulfotransferase to construct and elongate disulfated disaccharide unit [-&gt;3(6-sulfoGalbeta)1-&gt;4(6-sulfoGlcNAcbeta)1-&gt;] within keratan sulfate polymer. Has a preference for sulfating keratan sulfate, but it also transfers sulfate to the unsulfated polymer. Involved in biosynthesis of phosphacan, a major keratan sulfate proteoglycan in the developing brain. Involved in biosynthesis of 6-sulfoGalbeta-containing O-linked glycans in high endothelial venules of lymph nodes. May act in a synergistic manner with CHST4 to generate sialyl 6',6-disulfo Lewis X motif, a recognition determinant for immune cell receptors implicated in leukocyte trafficking. Catalyzes sulfation of N-acetyllactosamine (LacNAc) oligosaccharides with highest efficiency for sialylated LacNAc structures. The sequence is that of Carbohydrate sulfotransferase 1 (Chst1) from Mus musculus (Mouse).